The chain runs to 820 residues: LPS-assembly protein LptD (820 aa).

The segment at 1 to 27 (MDLSSLPDPLRPTHSRLPARRRDRAEP) is disordered. Residues 13-22 (THSRLPARRR) are compositionally biased toward basic residues.

This sequence belongs to the LptD family. As to quaternary structure, component of the lipopolysaccharide transport and assembly complex. Interacts with LptE and LptA.

Its function is as follows. Together with LptE, is involved in the assembly of lipopolysaccharide (LPS) at the surface of the outer membrane. The sequence is that of LPS-assembly protein LptD from Paracidovorax citrulli (strain AAC00-1) (Acidovorax citrulli).